A 101-amino-acid polypeptide reads, in one-letter code: Therostasin (101 aa).

The signal sequence occupies residues 1–19; it reads MRGLAVLLLVACFCSVAFG. Antistasin-like domains are found at residues 21 to 46 and 49 to 75; these read CENT…TCLC and CNDA…FCTC.

Salivary glands.

It is found in the secreted. In terms of biological role, potent inhibitor of factor Xa. It also inhibits trypsin in a weaker manner. This is Therostasin from Theromyzon tessulatum (Duck leech).